A 615-amino-acid chain; its full sequence is Pentatricopeptide repeat-containing protein At2g25580 (615 aa).

Positions 40-98 (FGNSNDSSEMNPREGYNGRIQNRTGSSGEVSESIHTQSQSLGSNQGRNEQSWKQSPSLS) are disordered. Positions 58-98 (RIQNRTGSSGEVSESIHTQSQSLGSNQGRNEQSWKQSPSLS) are enriched in polar residues. 4 PPR repeats span residues 288-318 (DLSS…MSEK), 319-353 (NLET…GNIP), 354-389 (DGQL…GIAP), and 390-420 (SIED…MPME). Positions 490–520 (SSMQEFRAGDTNLPENDELFQLLRNLKMHMV) are type E(+) motif. A type DYW motif region spans residues 521–615 (EVGYVAETRM…NGACTCKDYW (95 aa)).

The protein belongs to the PPR family. PCMP-H subfamily.

In Arabidopsis thaliana (Mouse-ear cress), this protein is Pentatricopeptide repeat-containing protein At2g25580 (PCMP-H75).